Here is a 75-residue protein sequence, read N- to C-terminus: uncharacterized protein (75 aa).

Positions 1-75 (MIKIYSTPTC…KAEIDKLIEK (75 aa)) constitute a Glutaredoxin domain. Cys-10 and Cys-13 are joined by a disulfide.

Belongs to the glutaredoxin family.

This is an uncharacterized protein from Clostridium pasteurianum.